Reading from the N-terminus, the 139-residue chain is Large ribosomal subunit protein uL16 (139 aa).

Residues 1 to 16 (MLIPKRTKYRKQHRPV) are compositionally biased toward basic residues. The tract at residues 1 to 22 (MLIPKRTKYRKQHRPVRSGMSK) is disordered.

This sequence belongs to the universal ribosomal protein uL16 family. Part of the 50S ribosomal subunit.

In terms of biological role, binds 23S rRNA and is also seen to make contacts with the A and possibly P site tRNAs. This Bifidobacterium longum (strain DJO10A) protein is Large ribosomal subunit protein uL16.